The chain runs to 453 residues: MSFDLIIKNGTVILENEARVIDIAAQGGKIAAIGENLGEAKNVLDATGLIVSPGMVDAHTHISEPGRTHWEGYETGTRAAAKGGITTMIEMPLNQLPATVDRETIELKFDAAKGKLTIDAAQLGGLVSYNLDRLHELDEVGVVGFKCFVATCGDRGIDNDFRDVNDWQFYKGAQKLGEMDQTVLVHCENALICDELGEEAKREGRVTAHDYVASRPVFTEVEAIRRVLYLAKAAGCRLHVCHISSPEGVEEVTRARQEVQDVTCESCPHYFVLDTDQFEEIGTLAKCSPPIRDQENQKGMWEKLFNGEIDCLVSDHSPCPPEMKAGNIMQAWGGIAGLQNCMDVMFDEAVQKRGMSLPMFGKLMATNAADIFGLKHKGRIAPGKDADLVFIQPDSSYVLKNEDLEYRHKVSPYVGRTIGARITKTILRGDVIYDIEHGFPVPPKGQFILKHQQ.

The Zn(2+) site is built by His-59, His-61, Lys-146, His-186, His-242, and Asp-315. Lys-146 bears the N6-carboxylysine mark.

The protein belongs to the metallo-dependent hydrolases superfamily. Allantoinase family. In terms of assembly, homotetramer. It depends on Zn(2+) as a cofactor. In terms of processing, carboxylation allows a single lysine to coordinate two zinc ions.

The catalysed reaction is (S)-allantoin + H2O = allantoate + H(+). It participates in nitrogen metabolism; (S)-allantoin degradation; allantoate from (S)-allantoin: step 1/1. Catalyzes the conversion of allantoin (5-ureidohydantoin) to allantoic acid by hydrolytic cleavage of the five-member hydantoin ring. The protein is Allantoinase of Salmonella gallinarum (strain 287/91 / NCTC 13346).